Here is a 325-residue protein sequence, read N- to C-terminus: Phospholipid phosphatase-related protein type 1 (325 aa).

The next 3 membrane-spanning stretches (helical) occupy residues 11 to 31, 67 to 87, and 127 to 147; these read YSIIPCFIFVELVIMAGTVLL, FISPLVLYCVLAATPTAIIFI, and FIGVFAFGLFATDIFVNAGQV. N163 carries N-linked (GlcNAc...) asparagine glycosylation. 3 consecutive transmembrane segments (helical) span residues 201–218, 230–247, and 257–277; these read AALSIYSALYATMYITST, VLCLGTLCCAFLTGLNRV, and VIGGFILGTAIALFLGLCVVH. N316 carries N-linked (GlcNAc...) asparagine glycosylation.

The protein belongs to the PA-phosphatase related phosphoesterase family.

The protein resides in the cell membrane. Its subcellular location is the cell projection. It is found in the neuron projection. Its function is as follows. May play a role in neurite outgrowth and neurogenesis. The sequence is that of Phospholipid phosphatase-related protein type 1 from Xenopus tropicalis (Western clawed frog).